We begin with the raw amino-acid sequence, 290 residues long: Eukaryotic translation initiation factor 3 subunit G (290 aa).

A disordered region spans residues 1 to 34 (MSRLGNRAADWADDEEFDDPSALPAQQVTTNKDG). Residues 210 to 288 (ATLRVTNVSE…LILRVEFAKR (79 aa)) form the RRM domain.

It belongs to the eIF-3 subunit G family. In terms of assembly, component of the eukaryotic translation initiation factor 3 (eIF-3) complex.

It is found in the cytoplasm. Its function is as follows. RNA-binding component of the eukaryotic translation initiation factor 3 (eIF-3) complex, which is involved in protein synthesis of a specialized repertoire of mRNAs and, together with other initiation factors, stimulates binding of mRNA and methionyl-tRNAi to the 40S ribosome. The eIF-3 complex specifically targets and initiates translation of a subset of mRNAs involved in cell proliferation. This subunit can bind 18S rRNA. The protein is Eukaryotic translation initiation factor 3 subunit G (tif35) of Aspergillus fumigatus (strain CBS 144.89 / FGSC A1163 / CEA10) (Neosartorya fumigata).